We begin with the raw amino-acid sequence, 190 residues long: Adenine phosphoribosyltransferase (190 aa).

The protein belongs to the purine/pyrimidine phosphoribosyltransferase family. Homodimer.

The protein resides in the cytoplasm. The enzyme catalyses AMP + diphosphate = 5-phospho-alpha-D-ribose 1-diphosphate + adenine. The protein operates within purine metabolism; AMP biosynthesis via salvage pathway; AMP from adenine: step 1/1. Functionally, catalyzes a salvage reaction resulting in the formation of AMP, that is energically less costly than de novo synthesis. In Treponema denticola (strain ATCC 35405 / DSM 14222 / CIP 103919 / JCM 8153 / KCTC 15104), this protein is Adenine phosphoribosyltransferase.